A 1173-amino-acid polypeptide reads, in one-letter code: DNA polymerase catalytic subunit (1173 aa).

2 disordered regions span residues 554-625 (PSLP…SASG) and 1123-1144 (EGPGRGEGLGVGGGEGTRPPRK). Residues 564 to 578 (GGDGAGLEGGDGGTA) are compositionally biased toward gly residues. Residues 591 to 606 (DGEDEDDPEGGDEGEN) show a composition bias toward acidic residues. Residues 607–618 (GECRENGLEKEG) show a composition bias toward basic and acidic residues. Residues 1123–1138 (EGPGRGEGLGVGGGEG) are compositionally biased toward gly residues.

It belongs to the DNA polymerase type-B family.

The protein resides in the host nucleus. It carries out the reaction DNA(n) + a 2'-deoxyribonucleoside 5'-triphosphate = DNA(n+1) + diphosphate. The sequence is that of DNA polymerase catalytic subunit (UL54) from Rattus.